Consider the following 313-residue polypeptide: 4-hydroxy-3-methylbut-2-enyl diphosphate reductase (313 aa).

Cysteine 12 lines the [4Fe-4S] cluster pocket. (2E)-4-hydroxy-3-methylbut-2-enyl diphosphate contacts are provided by histidine 41 and histidine 74. 2 residues coordinate dimethylallyl diphosphate: histidine 41 and histidine 74. Residues histidine 41 and histidine 74 each contribute to the isopentenyl diphosphate site. [4Fe-4S] cluster is bound at residue cysteine 96. Histidine 124 is a binding site for (2E)-4-hydroxy-3-methylbut-2-enyl diphosphate. Residue histidine 124 participates in dimethylallyl diphosphate binding. Histidine 124 contributes to the isopentenyl diphosphate binding site. The active-site Proton donor is glutamate 126. Residue threonine 164 coordinates (2E)-4-hydroxy-3-methylbut-2-enyl diphosphate. Cysteine 194 provides a ligand contact to [4Fe-4S] cluster. (2E)-4-hydroxy-3-methylbut-2-enyl diphosphate contacts are provided by serine 222, serine 223, asparagine 224, and serine 266. Serine 222, serine 223, asparagine 224, and serine 266 together coordinate dimethylallyl diphosphate. Isopentenyl diphosphate is bound by residues serine 222, serine 223, asparagine 224, and serine 266.

The protein belongs to the IspH family. It depends on [4Fe-4S] cluster as a cofactor.

It carries out the reaction isopentenyl diphosphate + 2 oxidized [2Fe-2S]-[ferredoxin] + H2O = (2E)-4-hydroxy-3-methylbut-2-enyl diphosphate + 2 reduced [2Fe-2S]-[ferredoxin] + 2 H(+). The enzyme catalyses dimethylallyl diphosphate + 2 oxidized [2Fe-2S]-[ferredoxin] + H2O = (2E)-4-hydroxy-3-methylbut-2-enyl diphosphate + 2 reduced [2Fe-2S]-[ferredoxin] + 2 H(+). It participates in isoprenoid biosynthesis; dimethylallyl diphosphate biosynthesis; dimethylallyl diphosphate from (2E)-4-hydroxy-3-methylbutenyl diphosphate: step 1/1. The protein operates within isoprenoid biosynthesis; isopentenyl diphosphate biosynthesis via DXP pathway; isopentenyl diphosphate from 1-deoxy-D-xylulose 5-phosphate: step 6/6. In terms of biological role, catalyzes the conversion of 1-hydroxy-2-methyl-2-(E)-butenyl 4-diphosphate (HMBPP) into a mixture of isopentenyl diphosphate (IPP) and dimethylallyl diphosphate (DMAPP). Acts in the terminal step of the DOXP/MEP pathway for isoprenoid precursor biosynthesis. The polypeptide is 4-hydroxy-3-methylbut-2-enyl diphosphate reductase (Protochlamydia amoebophila (strain UWE25)).